The primary structure comprises 122 residues: Small ribosomal subunit protein uS13 (122 aa).

Positions 95–122 are disordered; that stretch reads GLPVRGQRTHTNARTRKGKAKPIAGKKK.

Belongs to the universal ribosomal protein uS13 family. In terms of assembly, part of the 30S ribosomal subunit. Forms a loose heterodimer with protein S19. Forms two bridges to the 50S subunit in the 70S ribosome.

Located at the top of the head of the 30S subunit, it contacts several helices of the 16S rRNA. In the 70S ribosome it contacts the 23S rRNA (bridge B1a) and protein L5 of the 50S subunit (bridge B1b), connecting the 2 subunits; these bridges are implicated in subunit movement. Contacts the tRNAs in the A and P-sites. The chain is Small ribosomal subunit protein uS13 from Zymomonas mobilis subsp. mobilis (strain ATCC 31821 / ZM4 / CP4).